Here is a 352-residue protein sequence, read N- to C-terminus: Biotin synthase (352 aa).

Residues 44-262 form the Radical SAM core domain; it reads NRVQVSTLLS…LAVARIMMPK (219 aa). Cys-59, Cys-63, and Cys-66 together coordinate [4Fe-4S] cluster. The [2Fe-2S] cluster site is built by Cys-103, Cys-134, Cys-194, and Arg-266.

It belongs to the radical SAM superfamily. Biotin synthase family. In terms of assembly, homodimer. It depends on [4Fe-4S] cluster as a cofactor. [2Fe-2S] cluster serves as cofactor.

The catalysed reaction is (4R,5S)-dethiobiotin + (sulfur carrier)-SH + 2 reduced [2Fe-2S]-[ferredoxin] + 2 S-adenosyl-L-methionine = (sulfur carrier)-H + biotin + 2 5'-deoxyadenosine + 2 L-methionine + 2 oxidized [2Fe-2S]-[ferredoxin]. The protein operates within cofactor biosynthesis; biotin biosynthesis; biotin from 7,8-diaminononanoate: step 2/2. In terms of biological role, catalyzes the conversion of dethiobiotin (DTB) to biotin by the insertion of a sulfur atom into dethiobiotin via a radical-based mechanism. This chain is Biotin synthase, found in Pseudomonas paraeruginosa (strain DSM 24068 / PA7) (Pseudomonas aeruginosa (strain PA7)).